The primary structure comprises 63 residues: DNA gyrase inhibitor YacG (63 aa).

Residues Cys9, Cys12, Cys28, and Cys32 each contribute to the Zn(2+) site.

It belongs to the DNA gyrase inhibitor YacG family. As to quaternary structure, interacts with GyrB. Zn(2+) serves as cofactor.

In terms of biological role, inhibits all the catalytic activities of DNA gyrase by preventing its interaction with DNA. Acts by binding directly to the C-terminal domain of GyrB, which probably disrupts DNA binding by the gyrase. In Salmonella choleraesuis (strain SC-B67), this protein is DNA gyrase inhibitor YacG.